The sequence spans 205 residues: Ribonuclease HII (205 aa).

In terms of domain architecture, RNase H type-2 spans 14–205 (SLISGIDEAG…SFRLKQLGEK (192 aa)). Positions 20, 21, and 117 each coordinate a divalent metal cation.

The protein belongs to the RNase HII family. It depends on Mn(2+) as a cofactor. Mg(2+) serves as cofactor.

Its subcellular location is the cytoplasm. The catalysed reaction is Endonucleolytic cleavage to 5'-phosphomonoester.. Its function is as follows. Endonuclease that specifically degrades the RNA of RNA-DNA hybrids. The protein is Ribonuclease HII of Chlorobium phaeobacteroides (strain DSM 266 / SMG 266 / 2430).